The chain runs to 430 residues: Maintenance of mitochondrial morphology protein 1 (430 aa).

Over M1–G82 the chain is Lumenal. The chain crosses the membrane as a helical span at residues L83–F103. The Cytoplasmic segment spans residues A104 to L430. Basic and acidic residues-rich tracts occupy residues R126 to N138 and E335 to K346. 2 disordered regions span residues R126 to E154 and Q315 to K346. In terms of domain architecture, SMP-LTD spans A178 to P408.

Belongs to the MMM1 family. In terms of assembly, homodimer. Component of the ER-mitochondria encounter structure (ERMES) or MDM complex, composed of MMM1, MDM10, MDM12 and MDM34. An MMM1 homodimer associates with one molecule of MDM12 on each side in a pairwise head-to-tail manner, and the SMP-LTD domains of MMM1 and MDM12 generate a continuous hydrophobic tunnel for phospholipid trafficking.

The protein localises to the endoplasmic reticulum membrane. Its function is as follows. Component of the ERMES/MDM complex, which serves as a molecular tether to connect the endoplasmic reticulum (ER) and mitochondria. Components of this complex are involved in the control of mitochondrial shape and protein biogenesis, and function in nonvesicular lipid trafficking between the ER and mitochondria. The MDM12-MMM1 subcomplex functions in the major beta-barrel assembly pathway that is responsible for biogenesis of all outer membrane beta-barrel proteins, and acts in a late step after the SAM complex. The MDM10-MDM12-MMM1 subcomplex further acts in the TOM40-specific pathway after the action of the MDM12-MMM1 complex. Essential for establishing and maintaining the structure of mitochondria and maintenance of mtDNA nucleoids. The chain is Maintenance of mitochondrial morphology protein 1 from Lodderomyces elongisporus (strain ATCC 11503 / CBS 2605 / JCM 1781 / NBRC 1676 / NRRL YB-4239) (Yeast).